The primary structure comprises 414 residues: Na(+)-translocating NADH-quinone reductase subunit B (414 aa).

The next 4 membrane-spanning stretches (helical) occupy residues 23–40 (WFAL…PGLV), 56–76 (IMIM…YNAG), 129–149 (FLPI…LFCM), and 164–184 (ILFA…LGIT). An FMN phosphoryl threonine modification is found at Thr-236. Helical transmembrane passes span 268-288 (IPGS…AMIV), 297-317 (IIAG…VVGS), 325-345 (MPWH…FMAT), 358-378 (WWYG…NPAY), and 381-401 (GMML…HVVI).

This sequence belongs to the NqrB/RnfD family. In terms of assembly, composed of six subunits; NqrA, NqrB, NqrC, NqrD, NqrE and NqrF. FMN is required as a cofactor.

The protein localises to the cell inner membrane. It carries out the reaction a ubiquinone + n Na(+)(in) + NADH + H(+) = a ubiquinol + n Na(+)(out) + NAD(+). Its function is as follows. NQR complex catalyzes the reduction of ubiquinone-1 to ubiquinol by two successive reactions, coupled with the transport of Na(+) ions from the cytoplasm to the periplasm. NqrA to NqrE are probably involved in the second step, the conversion of ubisemiquinone to ubiquinol. In Vibrio parahaemolyticus serotype O3:K6 (strain RIMD 2210633), this protein is Na(+)-translocating NADH-quinone reductase subunit B.